Reading from the N-terminus, the 158-residue chain is Succinate dehydrogenase [ubiquinone] cytochrome b small subunit, mitochondrial (158 aa).

The N-terminal 55 residues, 1-55 (MALWRLSVLCGAREGRALFLRTPVVRPALVSAFLQDRPAQGWCGTQHIHLSPSHH), are a transit peptide targeting the mitochondrion. Over 56–62 (SGSKAAS) the chain is Mitochondrial matrix. A helical membrane pass occupies residues 63–84 (LHWTGERVVSVLLLGLIPAAYL). Topologically, residues 85 to 89 (NPCSA) are mitochondrial intermembrane. A helical membrane pass occupies residues 90–110 (MDYSLAATLTLHSHWGIGQVV). His101 is a binding site for heme b. The Mitochondrial matrix segment spans residues 111–119 (TDYVHGDAV). Tyr113 lines the a ubiquinone pocket. The chain crosses the membrane as a helical span at residues 120–141 (QKAAKTGLLVLSAFTFAGLCYF). Residues 142–158 (NYHDVGICKAVAMLWKL) lie on the Mitochondrial intermembrane side of the membrane.

The protein belongs to the CybS family. As to quaternary structure, component of complex II composed of four subunits: the flavoprotein (FP) SDHA, iron-sulfur protein (IP) SDHB, and a cytochrome b560 composed of SDHC and SDHD.

Its subcellular location is the mitochondrion inner membrane. Its pathway is carbohydrate metabolism; tricarboxylic acid cycle. Its function is as follows. Membrane-anchoring subunit of succinate dehydrogenase (SDH) that is involved in complex II of the mitochondrial electron transport chain and is responsible for transferring electrons from succinate to ubiquinone (coenzyme Q). SDH also oxidizes malate to the non-canonical enol form of oxaloacetate, enol-oxaloacetate. Enol-oxaloacetate, which is a potent inhibitor of the succinate dehydrogenase activity, is further isomerized into keto-oxaloacetate. In Bos taurus (Bovine), this protein is Succinate dehydrogenase [ubiquinone] cytochrome b small subunit, mitochondrial (SDHD).